Consider the following 548-residue polypeptide: DNA-binding protein REPIN1 (548 aa).

The tract at residues 1–47 (MLERRCRGPTAMGPAHPWLFSGPSQESSQPNRGLRYQGKSVAQPGGP) is disordered. The segment covering 22-31 (GPSQESSQPN) has biased composition (polar residues). Ser27 carries the post-translational modification Phosphoserine. Lys39 carries the N6-acetyllysine modification. A C2H2-type 1; atypical zinc finger spans residues 53–75 (HRCAHCRKRFPGWVALWLHTRRC). 2 consecutive C2H2-type zinc fingers follow at residues 81-103 (LPCH…LQVH) and 112-134 (FICH…LRAH). A C2H2-type 4; atypical zinc finger spans residues 141–163 (ITCPECNKRFWRQKQLRAHLRRC). C2H2-type zinc fingers lie at residues 173–195 (FICG…KRVH), 232–254 (FQCA…RRVH), 260–282 (HQCP…RRIH), 288–310 (YPCT…SKIH), 356–378 (HSCT…QRQH), 384–406 (FTCT…SRVH), 412–434 (FACE…RRDH), 440–462 (FVCP…RRIH), 468–490 (YVCP…RRIH), 496–518 (YACP…RKSH), and 524–546 (FCCA…QKKH). At Lys272 the chain carries N6-acetyllysine.

In terms of assembly, homodimers and homomultimers. Found in a complex with RIP60 and RIP100. In terms of tissue distribution, expressed in the liver and in subcutaneous and visceral adipose tissue.

It is found in the nucleus. Its subcellular location is the cytoplasm. The protein resides in the cytosol. Functionally, sequence-specific double-stranded DNA-binding protein. Binds ATT-rich and T-rich DNA sequences and facilitates DNA bending. May regulate the expression of genes involved in cellular fatty acid import, including SCARB1/CD36, and genes involved in lipid droplet formation. May regulate the expression of LCN2, and thereby influence iron metabolism and apoptosis-related pathways. May regulate the expression of genes involved in glucose transport. In Rattus norvegicus (Rat), this protein is DNA-binding protein REPIN1 (Repin1).